The chain runs to 137 residues: Probable 4-amino-4-deoxy-L-arabinose-phosphoundecaprenol flippase subunit ArnF (137 aa).

At 1–3 the chain is on the cytoplasmic side; it reads MNA. Residues 4 to 24 form a helical membrane-spanning segment; sequence LRGWLAALGSVLLASAAQLGM. The Periplasmic segment spans residues 25–44; it reads RWGMSRLPLPEAWAGQTPER. Residues 45 to 65 form a helical membrane-spanning segment; it reads AALLAVALAVAAYAASLLCWL. The Cytoplasmic portion of the chain corresponds to 66-76; sequence AALRHLPLGRA. The helical transmembrane segment at 77–97 threads the bilayer; it reads YSLLSASYALVYLLAASLPAF. Residues 98 to 100 lie on the Periplasmic side of the membrane; sequence DET. A helical membrane pass occupies residues 101–121; it reads FSTSKTLGVGLVVLGVLTVNA. Topologically, residues 122–137 are cytoplasmic; sequence RRTAAAPAHHPSRKAP.

Belongs to the ArnF family. In terms of assembly, heterodimer of ArnE and ArnF.

It localises to the cell inner membrane. Its pathway is bacterial outer membrane biogenesis; lipopolysaccharide biosynthesis. Translocates 4-amino-4-deoxy-L-arabinose-phosphoundecaprenol (alpha-L-Ara4N-phosphoundecaprenol) from the cytoplasmic to the periplasmic side of the inner membrane. This Pseudomonas aeruginosa (strain ATCC 15692 / DSM 22644 / CIP 104116 / JCM 14847 / LMG 12228 / 1C / PRS 101 / PAO1) protein is Probable 4-amino-4-deoxy-L-arabinose-phosphoundecaprenol flippase subunit ArnF.